The following is a 183-amino-acid chain: Dual-action ribosomal maturation protein DarP (183 aa).

The protein belongs to the DarP family.

It is found in the cytoplasm. In terms of biological role, member of a network of 50S ribosomal subunit biogenesis factors which assembles along the 30S-50S interface, preventing incorrect 23S rRNA structures from forming. Promotes peptidyl transferase center (PTC) maturation. The chain is Dual-action ribosomal maturation protein DarP from Escherichia coli O7:K1 (strain IAI39 / ExPEC).